A 635-amino-acid chain; its full sequence is Glutamine sensor PIB2 (635 aa).

The tract at residues 1–110 (MTALHSVSKT…GTGFVDRKQQ (110 aa)) is disordered. Positions 1–164 (MTALHSVSKT…KTLPFTDDQR (164 aa)) are may play a role in attenuating TORC1 signaling. Basic and acidic residues predominate over residues 33 to 44 (RNHDYRGRKGDE). A phosphoserine mark is found at serine 46 and serine 53. A Phosphothreonine modification is found at threonine 56. Over residues 67–85 (STHSEQSILSSISLKSMVN) the composition is skewed to polar residues. Phosphoserine occurs at positions 73, 113, 124, 148, 165, and 174. 2 disordered regions span residues 123–181 (NSAE…VSRG) and 224–254 (SSNL…TSKV). The segment covering 238 to 254 (SSSSSTSSVSSSSTSKV) has biased composition (low complexity). Phosphoserine is present on residues serine 300, serine 309, and serine 381. The interval 304 to 440 (LPQPASSTNL…PTISNRNSAR (137 aa)) is required for interaction with TORC1. An FYVE-type; atypical zinc finger spans residues 452 to 527 (DSKRNSCRYC…ICDDCLVEYE (76 aa)). Residues cysteine 458, cysteine 461, cysteine 474, cysteine 477, cysteine 482, histidine 485, cysteine 519, and cysteine 522 each contribute to the Zn(2+) site. Disordered stretches follow at residues 534–557 (HNAN…DNRK) and 570–623 (ALFR…GSVI). 2 stretches are compositionally biased toward acidic residues: residues 543–553 (INVEEGEDDDN) and 601–616 (EEAD…EEGN). The tract at residues 620 to 635 (GSVIGSVPANWNWSSF) is may be required for TORC1 activation.

Interacts with the TORC1 complex when activated by glutamine or cysteine. Interacts with TOR1; glutamine enhances the interaction. Interacts with KOG1; glutamine enhances the interaction. Interacts with TCO89. Interacts with LST8; glutamine enhances the interaction. Interacts with TOR2; glutamine enhances the interaction.

The protein localises to the vacuole membrane. With respect to regulation, activated by glutamine. May also be activated by cysteine. Functions as an intracellular glutamine sensor that directly activates the TORC1 signaling pathway, to promote cell growth when glutamine is available. May play a role in repressing NPR1 activity independently of TORC1 signaling. This Saccharomyces cerevisiae (strain ATCC 204508 / S288c) (Baker's yeast) protein is Glutamine sensor PIB2.